Reading from the N-terminus, the 408-residue chain is NADH-quinone oxidoreductase subunit D (408 aa).

It belongs to the complex I 49 kDa subunit family. As to quaternary structure, NDH-1 is composed of 14 different subunits. Subunits NuoB, C, D, E, F, and G constitute the peripheral sector of the complex.

It is found in the cell inner membrane. It carries out the reaction a quinone + NADH + 5 H(+)(in) = a quinol + NAD(+) + 4 H(+)(out). NDH-1 shuttles electrons from NADH, via FMN and iron-sulfur (Fe-S) centers, to quinones in the respiratory chain. The immediate electron acceptor for the enzyme in this species is believed to be ubiquinone. Couples the redox reaction to proton translocation (for every two electrons transferred, four hydrogen ions are translocated across the cytoplasmic membrane), and thus conserves the redox energy in a proton gradient. The polypeptide is NADH-quinone oxidoreductase subunit D (Campylobacter jejuni subsp. jejuni serotype O:2 (strain ATCC 700819 / NCTC 11168)).